We begin with the raw amino-acid sequence, 1044 residues long: Sarcoplasmic/endoplasmic reticulum calcium ATPase 2 (1044 aa).

Over 1–48 (MENAHTKTVEEVLGHFGVNESTGLSLEQVKKLKERWGSNELPAEEGKT) the chain is Cytoplasmic. At Ser-38 the chain carries Phosphoserine. The helical transmembrane segment at 49–69 (LLELVIEQFEDLLVRILLLAA) threads the bilayer. At 70-89 (CISFVLAWFEEGEETITAFV) the chain is on the lumenal side. A helical transmembrane segment spans residues 90 to 110 (EPFVILLILVANAIVGVWQER). Over 111-253 (NAENAIEALK…QERTPLQQKL (143 aa)) the chain is Cytoplasmic. A helical transmembrane segment spans residues 254 to 273 (DEFGEQLSKVISLICIAVWI). At 274–295 (INIGHFNDPVHGGSWIRGAIYY) the chain is on the lumenal side. A 3'-nitrotyrosine mark is found at Tyr-294 and Tyr-295. Residues 296–313 (FKIAVALAVAAIPEGLPA) traverse the membrane as a helical segment. Ca(2+) contacts are provided by Val-304, Ala-305, Ile-307, and Glu-309. At 314-756 (VITTCLALGT…EEGRAIYNNM (443 aa)) the chain is on the cytoplasmic side. Residue Asp-351 is the 4-aspartylphosphate intermediate of the active site. Mg(2+)-binding residues include Asp-351 and Thr-353. Thr-353 contributes to the ATP binding site. Thr-441 carries the post-translational modification Phosphothreonine. ATP contacts are provided by Glu-442, Arg-489, and Lys-514. Ser-531 is subject to Phosphoserine. Arg-559 serves as a coordination point for ATP. Residues 575–594 (MHLEDSANFIKYETNLTFVG) are interaction with HAX1. Ser-580 carries the post-translational modification Phosphoserine. The ATP site is built by Thr-624, Gly-625, and Asp-626. A phosphoserine mark is found at Ser-661 and Ser-663. Arg-677 and Lys-683 together coordinate ATP. Asp-702 lines the Mg(2+) pocket. Residue Asn-705 participates in ATP binding. A helical transmembrane segment spans residues 757–776 (KQFIRYLISSNVGEVVCIFL). 2 residues coordinate Ca(2+): Asn-767 and Glu-770. The Lumenal portion of the chain corresponds to 777–786 (TAALGFPEAL). A helical membrane pass occupies residues 787-807 (IPVQLLWVNLVTDGLPATALG). The tract at residues 787 to 807 (IPVQLLWVNLVTDGLPATALG) is interaction with PLN. Positions 788–1044 (PVQLLWVNLV…DTNFSDMFWS (257 aa)) are interaction with TMEM64 and PDIA3. The Ca(2+) site is built by Asn-795, Thr-798, and Asp-799. Topologically, residues 808–827 (FNPPDLDIMNKPPRNPKEPL) are cytoplasmic. The chain crosses the membrane as a helical span at residues 828–850 (ISGWLFFRYLAIGCYVGAATVGA). Residues 851–896 (AAWWFIAADGGPRVSFYQLSHFLQCKEDNPDFDGVDCAIFESPYPM) are Lumenal-facing. Cys-875 and Cys-887 are disulfide-bonded. The helical transmembrane segment at 897-916 (TMALSVLVTIEMCNALNSLS) threads the bilayer. Residue Glu-907 coordinates Ca(2+). Over 917-929 (ENQSLLRMPPWEN) the chain is Cytoplasmic. Residues 930 to 948 (IWLVGSICLSMSLHFLILY) form a helical membrane-spanning segment. The segment at 931–942 (WLVGSICLSMSL) is interaction with PLN. Residues 949–963 (VEPLPLIFQITPLNL) lie on the Lumenal side of the membrane. A helical transmembrane segment spans residues 964–984 (TQWLMVLKISLPVILMDETLK). Residues 985 to 1044 (FVARNYLEQPGKECVQPATKSSCSLSACTDGISWPFVLLIMPLVVWVYSTDTNFSDMFWS) are Cytoplasmic-facing.

Belongs to the cation transport ATPase (P-type) (TC 3.A.3) family. Type IIA subfamily. Interacts with sarcolipin (SLN); the interaction inhibits ATP2A2 Ca(2+) affinity. Interacts with phospholamban (PLN); the interaction inhibits ATP2A2 Ca(2+) affinity. Interacts with myoregulin (MRLN). Interacts with ARLN and ERLN; the interactions inhibit ATP2A2 Ca(2+) affinity. Interacts with STRIT1/DWORF; the interaction results in activation of ATP2A2. Interacts with the monomeric forms of SLN, PLN, ARLN, ERLN and STRI1/DWORF. Interacts with HAX1. Interacts with S100A8 and S100A9. Interacts with SLC35G1 and STIM1. Interacts with TMEM203. Interacts with TMEM64 and PDIA3. Interacts with TMX1. Interacts with TMX2. Interacts with VMP1; VMP1 competes with PLN and SLN to prevent them from forming an inhibitory complex with ATP2A2. Interacts with ULK1. Interacts with S100A1 in a Ca(2+)-dependent manner. Interacts with TUNAR. Interacts with FLVCR2; this interaction occurs in the absence of heme and promotes ATP2A2 proteasomal degradation; this complex is dissociated upon heme binding. Interacts with FNIP1. In terms of assembly, interacts with TRAM2 (via C-terminus). Mg(2+) is required as a cofactor. Post-translationally, nitrated under oxidative stress. Nitration on the two tyrosine residues inhibits catalytic activity. In terms of processing, serotonylated on Gln residues by TGM2 in response to hypoxia, leading to its inactivation. As to expression, isoform 2 is highly expressed in heart and slow twitch skeletal muscle. Isoform 2 is widely expressed.

It localises to the endoplasmic reticulum membrane. The protein localises to the sarcoplasmic reticulum membrane. It carries out the reaction Ca(2+)(in) + ATP + H2O = Ca(2+)(out) + ADP + phosphate + H(+). With respect to regulation, has different conformational states with differential Ca2+ affinity. The E1 conformational state (active form) shows high Ca(2+) affinity, while the E2 state exhibits low Ca(2+) affinity. Binding of ATP allosterically increases its affinity for subsequent binding of Ca2+. Reversibly inhibited by phospholamban (PLN) at low calcium concentrations. PLN inhibits ATP2A2 Ca(2+) affinity by disrupting its allosteric activation by ATP. Inhibited by sarcolipin (SLN) and myoregulin (MRLN). The inhibition is blocked by VMP1. Enhanced by STRIT1/DWORF; STRIT1 increases activity by displacing sarcolipin (SLN), phospholamban (PLN) and myoregulin (MRLN). Stabilizes SERCA2 in its E2 state. Its function is as follows. This magnesium-dependent enzyme catalyzes the hydrolysis of ATP coupled with the translocation of calcium from the cytosol to the sarcoplasmic reticulum lumen. Involved in autophagy in response to starvation. Upon interaction with VMP1 and activation, controls ER-isolation membrane contacts for autophagosome formation. Also modulates ER contacts with lipid droplets, mitochondria and endosomes. In coordination with FLVCR2 mediates heme-stimulated switching from mitochondrial ATP synthesis to thermogenesis. Functionally, involved in the regulation of the contraction/relaxation cycle. Acts as a regulator of TNFSF11-mediated Ca(2+) signaling pathways via its interaction with TMEM64 which is critical for the TNFSF11-induced CREB1 activation and mitochondrial ROS generation necessary for proper osteoclast generation. Association between TMEM64 and SERCA2 in the ER leads to cytosolic Ca(2+) spiking for activation of NFATC1 and production of mitochondrial ROS, thereby triggering Ca(2+) signaling cascades that promote osteoclast differentiation and activation. This chain is Sarcoplasmic/endoplasmic reticulum calcium ATPase 2, found in Mus musculus (Mouse).